Consider the following 338-residue polypeptide: Methionine import ATP-binding protein MetN (338 aa).

In terms of domain architecture, ABC transporter spans 2–241 (ISLDGIRKVF…PKEHITKEFV (240 aa)). ATP is bound at residue 38–45 (GYSGAGKS).

It belongs to the ABC transporter superfamily. Methionine importer (TC 3.A.1.24) family. As to quaternary structure, the complex is composed of two ATP-binding proteins (MetN), two transmembrane proteins (MetI) and a solute-binding protein (MetQ).

Its subcellular location is the cell membrane. The catalysed reaction is L-methionine(out) + ATP + H2O = L-methionine(in) + ADP + phosphate + H(+). It catalyses the reaction D-methionine(out) + ATP + H2O = D-methionine(in) + ADP + phosphate + H(+). In terms of biological role, part of the ABC transporter complex MetNIQ involved in methionine import. Responsible for energy coupling to the transport system. In Halalkalibacterium halodurans (strain ATCC BAA-125 / DSM 18197 / FERM 7344 / JCM 9153 / C-125) (Bacillus halodurans), this protein is Methionine import ATP-binding protein MetN.